Consider the following 406-residue polypeptide: 4-hydroxy-3-methylbut-2-en-1-yl diphosphate synthase (ferredoxin) (406 aa).

The [4Fe-4S] cluster site is built by Cys-315, Cys-318, Cys-349, and Glu-356.

This sequence belongs to the IspG family. It depends on [4Fe-4S] cluster as a cofactor.

It carries out the reaction (2E)-4-hydroxy-3-methylbut-2-enyl diphosphate + 2 oxidized [2Fe-2S]-[ferredoxin] + H2O = 2-C-methyl-D-erythritol 2,4-cyclic diphosphate + 2 reduced [2Fe-2S]-[ferredoxin] + H(+). The protein operates within isoprenoid biosynthesis; isopentenyl diphosphate biosynthesis via DXP pathway; isopentenyl diphosphate from 1-deoxy-D-xylulose 5-phosphate: step 5/6. In terms of biological role, converts 2C-methyl-D-erythritol 2,4-cyclodiphosphate (ME-2,4cPP) into 1-hydroxy-2-methyl-2-(E)-butenyl 4-diphosphate. The polypeptide is 4-hydroxy-3-methylbut-2-en-1-yl diphosphate synthase (ferredoxin) (Trichodesmium erythraeum (strain IMS101)).